Here is a 451-residue protein sequence, read N- to C-terminus: Magnesium transporter MgtE (451 aa).

The Cytoplasmic portion of the chain corresponds to 1–285 (MVQNMTYDEL…TKAYVAAYRR (285 aa)). Positions 64 and 96 each coordinate Mg(2+). 2 consecutive CBS domains span residues 140-203 (MTNR…VQDL) and 204-260 (MFTR…EADE). Mg(2+) contacts are provided by E218, D228, D249, D252, E257, E260, and D261. A helical transmembrane segment spans residues 286–306 (LPWLILLLFIGLISGSIISYF). Residues 307–311 (EDALK) lie on the Extracellular side of the membrane. A helical transmembrane segment spans residues 312–332 (QVVALAFFMPMVSGMTGNTGT). Topologically, residues 333–371 (QSLAVVIRGLSKEEMNKKTIVRLIFREFRTSIFIGAVCS) are cytoplasmic. The next 2 helical transmembrane spans lie at 372–392 (VLIA…FVVA) and 393–413 (SSLF…PIIL). Residues 414–427 (HKLKVDPAIASGPL) lie on the Cytoplasmic side of the membrane. Mg(2+) is bound by residues D419 and D433. Residues 428–448 (ITTLNDILSLLIYFGIATAFI) form a helical membrane-spanning segment. The Extracellular portion of the chain corresponds to 449–451 (HSL).

The protein belongs to the SLC41A transporter family. In terms of assembly, homodimer.

The protein localises to the cell membrane. The catalysed reaction is Mg(2+)(in) = Mg(2+)(out). With respect to regulation, binds cyclic di-AMP (c-di-AMP), which may regulate the transporter activity. Its function is as follows. Acts as a magnesium transporter. MgtE is the dominant transporter under rich-medium growth conditions, and it may provide the primary route of magnesium import in B.subtilis, while the other putative transport proteins are likely to be utilized for more-specialized growth conditions. The sequence is that of Magnesium transporter MgtE from Bacillus subtilis (strain 168).